The primary structure comprises 301 residues: MGRAREMGWMAAGLMIGAGACYCMYKLTMGRSEGNELEDEEEDEWEDGQDLDEEEADNWFDFTAMARPWSEDGDWDEPGAPGGTEDRRSGGGKANRAHPIKQRPFPYEHKNIWGEQSFKSFTCILDLNKCVSTQRKKRFTKNINAGFSLSPNISKHLASLSVVGNRSPTPHPTVREKALFVPENPNSSLENQGQIKMSIDEVCRETLLCCCKSFLQQAGLSLLISMTVINNMLAKSVSDLKFPLLSKGSGCAEVRGLEELMSLSEKPVLVGEALAAQMLSSFMCLFTRSGSREMLVEAISP.

Residues 1-6 (MGRARE) form a mitochondrion outer membrane (MOM)-targeting sequence region. The Mitochondrial intermembrane portion of the chain corresponds to 1-7 (MGRAREM). The helical; Signal-anchor transmembrane segment at 8–25 (GWMAAGLMIGAGACYCMY) threads the bilayer. The tract at residues 26-36 (KLTMGRSEGNE) is mitochondrion outer membrane (MOM)-targeting sequence. Topologically, residues 26-301 (KLTMGRSEGN…REMLVEAISP (276 aa)) are cytoplasmic. Positions 69–101 (WSEDGDWDEPGAPGGTEDRRSGGGKANRAHPIK) are disordered.

It belongs to the eutherian X-chromosome-specific Armcx family. Highly expressed in the developing neural tissues, neural crest derivatives and hind limbs. Also widely expressed in the adult nervous tissue, especially in the forebrain, including the cerebral cortex, hippocampus and thalamus.

The protein resides in the mitochondrion. The protein localises to the mitochondrion outer membrane. In terms of biological role, may regulate the dynamics and distribution of mitochondria in neural cells. This chain is Protein ARMCX6 (Armcx6), found in Mus musculus (Mouse).